A 209-amino-acid polypeptide reads, in one-letter code: MQVFLDLDETLIHSIPVSRLGWTKSKPYPVKPFTVQDAGTPLSVMMGSSKAVNDGRKRLATRLSLFKRTVLTDHIMCWRPTLRTFLNGLFASGYKINVWTAASKPYALEVVKALNLKSYGMGLLVTAQDYPKGSVKRLKYLTGLDAVKIPLSNTAIVDDREEVKRAQPTRAVHIKPFTASSANTACSESDELKRVTASLAIIAGRSRRR.

In terms of domain architecture, FCP1 homology spans 1–199 (MQVFLDLDET…DELKRVTASL (199 aa)).

This is an uncharacterized protein from Dryophytes versicolor (chameleon treefrog).